Consider the following 154-residue polypeptide: MNEAATVLGTADIQEILKLLPHRYPFLLVDRIIEIDSDNSAIGIKNVTANEPHFTGHFPEKPIMPGVLLIEGMAQTAGAICARKTGGGSNLVYFMTIDNARFRKPVVPGDRVEFHVVKQKQRGNIWKFHCDAKVDGQLVAEADIGAMIVSKEDV.

His-57 is an active-site residue.

Belongs to the thioester dehydratase family. FabZ subfamily.

The protein resides in the cytoplasm. The enzyme catalyses a (3R)-hydroxyacyl-[ACP] = a (2E)-enoyl-[ACP] + H2O. Functionally, involved in unsaturated fatty acids biosynthesis. Catalyzes the dehydration of short chain beta-hydroxyacyl-ACPs and long chain saturated and unsaturated beta-hydroxyacyl-ACPs. The polypeptide is 3-hydroxyacyl-[acyl-carrier-protein] dehydratase FabZ (Sinorhizobium medicae (strain WSM419) (Ensifer medicae)).